A 219-amino-acid chain; its full sequence is Large ribosomal subunit protein uL1 (219 aa).

The protein belongs to the universal ribosomal protein uL1 family. In terms of assembly, part of the 50S ribosomal subunit.

Probably involved in E site tRNA release. Binds directly to 23S rRNA. Functionally, protein L1 is also a translational repressor protein, it controls the translation of its operon by binding to its mRNA. In Methanocaldococcus jannaschii (strain ATCC 43067 / DSM 2661 / JAL-1 / JCM 10045 / NBRC 100440) (Methanococcus jannaschii), this protein is Large ribosomal subunit protein uL1.